Here is a 286-residue protein sequence, read N- to C-terminus: Shikimate dehydrogenase (NADP(+)) (286 aa).

Residues 19 to 21 and Thr66 contribute to the shikimate site; that span reads SLS. Catalysis depends on Lys70, which acts as the Proton acceptor. The shikimate site is built by Asn91 and Asp107. NADP(+) contacts are provided by residues 129–133 and Leu229; that span reads GSGGA. Tyr231 contacts shikimate. Residue Gly252 participates in NADP(+) binding.

The protein belongs to the shikimate dehydrogenase family. As to quaternary structure, homodimer.

The enzyme catalyses shikimate + NADP(+) = 3-dehydroshikimate + NADPH + H(+). The protein operates within metabolic intermediate biosynthesis; chorismate biosynthesis; chorismate from D-erythrose 4-phosphate and phosphoenolpyruvate: step 4/7. In terms of biological role, involved in the biosynthesis of the chorismate, which leads to the biosynthesis of aromatic amino acids. Catalyzes the reversible NADPH linked reduction of 3-dehydroshikimate (DHSA) to yield shikimate (SA). The polypeptide is Shikimate dehydrogenase (NADP(+)) (Prochlorococcus marinus (strain MIT 9312)).